The sequence spans 386 residues: S-adenosylmethionine synthase (386 aa).

His16 serves as a coordination point for ATP. Residue Asp18 participates in Mg(2+) binding. A K(+)-binding site is contributed by Glu44. Residues Glu57 and Gln100 each coordinate L-methionine. The flexible loop stretch occupies residues Gln100–Gln110. Residues Asp164 to Lys166, Arg231 to Phe232, Asp240, Arg246 to Lys247, Ala263, and Lys267 contribute to the ATP site. Residue Asp240 coordinates L-methionine. An L-methionine-binding site is contributed by Lys271.

Belongs to the AdoMet synthase family. In terms of assembly, homotetramer; dimer of dimers. Mg(2+) serves as cofactor. Requires K(+) as cofactor.

It is found in the cytoplasm. It catalyses the reaction L-methionine + ATP + H2O = S-adenosyl-L-methionine + phosphate + diphosphate. The protein operates within amino-acid biosynthesis; S-adenosyl-L-methionine biosynthesis; S-adenosyl-L-methionine from L-methionine: step 1/1. Its function is as follows. Catalyzes the formation of S-adenosylmethionine (AdoMet) from methionine and ATP. The overall synthetic reaction is composed of two sequential steps, AdoMet formation and the subsequent tripolyphosphate hydrolysis which occurs prior to release of AdoMet from the enzyme. The sequence is that of S-adenosylmethionine synthase from Sulfurovum sp. (strain NBC37-1).